A 188-amino-acid chain; its full sequence is dITP/XTP pyrophosphatase (188 aa).

Position 10–15 (10–15) interacts with substrate; it reads TSNPHK. Mg(2+) contacts are provided by E39 and D69. The Proton acceptor role is filled by D69. Substrate is bound by residues S70, 145 to 148, K168, and 173 to 174; these read FGFD and HR.

This sequence belongs to the HAM1 NTPase family. Homodimer. It depends on Mg(2+) as a cofactor.

It catalyses the reaction XTP + H2O = XMP + diphosphate + H(+). The catalysed reaction is dITP + H2O = dIMP + diphosphate + H(+). The enzyme catalyses ITP + H2O = IMP + diphosphate + H(+). Functionally, pyrophosphatase that catalyzes the hydrolysis of nucleoside triphosphates to their monophosphate derivatives, with a high preference for the non-canonical purine nucleotides XTP (xanthosine triphosphate), dITP (deoxyinosine triphosphate) and ITP. Seems to function as a house-cleaning enzyme that removes non-canonical purine nucleotides from the nucleotide pool, thus preventing their incorporation into DNA/RNA and avoiding chromosomal lesions. The polypeptide is dITP/XTP pyrophosphatase (Ignicoccus hospitalis (strain KIN4/I / DSM 18386 / JCM 14125)).